Here is a 402-residue protein sequence, read N- to C-terminus: Tryptophan synthase beta chain (402 aa).

Lys-91 bears the N6-(pyridoxal phosphate)lysine mark.

The protein belongs to the TrpB family. As to quaternary structure, tetramer of two alpha and two beta chains. The cofactor is pyridoxal 5'-phosphate.

The catalysed reaction is (1S,2R)-1-C-(indol-3-yl)glycerol 3-phosphate + L-serine = D-glyceraldehyde 3-phosphate + L-tryptophan + H2O. The protein operates within amino-acid biosynthesis; L-tryptophan biosynthesis; L-tryptophan from chorismate: step 5/5. The beta subunit is responsible for the synthesis of L-tryptophan from indole and L-serine. The protein is Tryptophan synthase beta chain of Streptococcus thermophilus (strain ATCC BAA-250 / LMG 18311).